The chain runs to 373 residues: Transaldolase (373 aa).

The active-site Schiff-base intermediate with substrate is the K143.

Belongs to the transaldolase family. Type 2 subfamily.

It localises to the cytoplasm. The catalysed reaction is D-sedoheptulose 7-phosphate + D-glyceraldehyde 3-phosphate = D-erythrose 4-phosphate + beta-D-fructose 6-phosphate. The protein operates within carbohydrate degradation; pentose phosphate pathway; D-glyceraldehyde 3-phosphate and beta-D-fructose 6-phosphate from D-ribose 5-phosphate and D-xylulose 5-phosphate (non-oxidative stage): step 2/3. Transaldolase is important for the balance of metabolites in the pentose-phosphate pathway. This Mycobacterium tuberculosis (strain ATCC 25618 / H37Rv) protein is Transaldolase (tal).